The following is a 386-amino-acid chain: Succinate--CoA ligase [ADP-forming] subunit beta (386 aa).

Positions 9 to 244 (KEILRNFGVP…LDEEDPAEVE (236 aa)) constitute an ATP-grasp domain. ATP-binding positions include Lys-46, 53 to 55 (GRG), Glu-99, Ala-102, and Glu-107. 2 residues coordinate Mg(2+): Asn-199 and Asp-213. Substrate contacts are provided by residues Asn-264 and 321-323 (GIM).

It belongs to the succinate/malate CoA ligase beta subunit family. Heterotetramer of two alpha and two beta subunits. The cofactor is Mg(2+).

The enzyme catalyses succinate + ATP + CoA = succinyl-CoA + ADP + phosphate. It catalyses the reaction GTP + succinate + CoA = succinyl-CoA + GDP + phosphate. It functions in the pathway carbohydrate metabolism; tricarboxylic acid cycle; succinate from succinyl-CoA (ligase route): step 1/1. Its function is as follows. Succinyl-CoA synthetase functions in the citric acid cycle (TCA), coupling the hydrolysis of succinyl-CoA to the synthesis of either ATP or GTP and thus represents the only step of substrate-level phosphorylation in the TCA. The beta subunit provides nucleotide specificity of the enzyme and binds the substrate succinate, while the binding sites for coenzyme A and phosphate are found in the alpha subunit. This Polaromonas sp. (strain JS666 / ATCC BAA-500) protein is Succinate--CoA ligase [ADP-forming] subunit beta.